The primary structure comprises 433 residues: Ribosomal RNA small subunit methyltransferase B (433 aa).

S-adenosyl-L-methionine is bound by residues Cys-254–Lys-260, Asp-277, Asp-303, and Asp-322. Catalysis depends on Cys-375, which acts as the Nucleophile.

This sequence belongs to the class I-like SAM-binding methyltransferase superfamily. RsmB/NOP family.

Its subcellular location is the cytoplasm. The enzyme catalyses cytidine(967) in 16S rRNA + S-adenosyl-L-methionine = 5-methylcytidine(967) in 16S rRNA + S-adenosyl-L-homocysteine + H(+). In terms of biological role, specifically methylates the cytosine at position 967 (m5C967) of 16S rRNA. The chain is Ribosomal RNA small subunit methyltransferase B from Sodalis glossinidius (strain morsitans).